Reading from the N-terminus, the 159-residue chain is Large ribosomal subunit protein uL15 (159 aa).

Over residues 21–34 the composition is skewed to basic residues; the sequence is LRPAPGAHKSKIRV. The segment at 21-55 is disordered; that stretch reads LRPAPGAHKSKIRVGRGEGSKGKTAGRGTKGSKAR.

Belongs to the universal ribosomal protein uL15 family. In terms of assembly, part of the 50S ribosomal subunit.

Its function is as follows. Binds to the 23S rRNA. The polypeptide is Large ribosomal subunit protein uL15 (Frankia casuarinae (strain DSM 45818 / CECT 9043 / HFP020203 / CcI3)).